A 216-amino-acid chain; its full sequence is Elongation factor Ts (216 aa).

Residues 81-84 (TDFV) are involved in Mg(2+) ion dislocation from EF-Tu.

The protein belongs to the EF-Ts family.

Its subcellular location is the cytoplasm. Its function is as follows. Associates with the EF-Tu.GDP complex and induces the exchange of GDP to GTP. It remains bound to the aminoacyl-tRNA.EF-Tu.GTP complex up to the GTP hydrolysis stage on the ribosome. This chain is Elongation factor Ts, found in Citrifermentans bemidjiense (strain ATCC BAA-1014 / DSM 16622 / JCM 12645 / Bem) (Geobacter bemidjiensis).